Reading from the N-terminus, the 44-residue chain is Photosystem I reaction center subunit IX (44 aa).

Residues 7–27 (YLSVAPVLSTLSLGFFAGFLI) traverse the membrane as a helical segment.

Belongs to the PsaJ family.

The protein localises to the plastid membrane. Functionally, may help in the organization of the PsaE and PsaF subunits. The polypeptide is Photosystem I reaction center subunit IX (Cuscuta obtusiflora (Peruvian dodder)).